The following is a 115-amino-acid chain: Cytochrome c oxidase assembly protein COX16 homolog, mitochondrial (115 aa).

The Mitochondrial matrix segment spans residues 1–6 (MSRLKF). A helical transmembrane segment spans residues 7–29 (VRVGLPFFAIVLGSAYGLHFFQQ). At 30–115 (VRFDFRKIKQ…RKVRELKSNV (86 aa)) the chain is on the mitochondrial intermembrane side.

It belongs to the COX16 family.

The protein resides in the mitochondrion inner membrane. Required for the assembly of the mitochondrial respiratory chain complex IV (CIV), also known as cytochrome c oxidase. In Caenorhabditis elegans, this protein is Cytochrome c oxidase assembly protein COX16 homolog, mitochondrial.